A 73-amino-acid polypeptide reads, in one-letter code: Large ribosomal subunit protein bL31 (73 aa).

It belongs to the bacterial ribosomal protein bL31 family. Type A subfamily. Part of the 50S ribosomal subunit.

Binds the 23S rRNA. This chain is Large ribosomal subunit protein bL31, found in Rhodospirillum centenum (strain ATCC 51521 / SW).